The chain runs to 209 residues: 3-demethoxyubiquinol 3-hydroxylase (209 aa).

A compositionally biased stretch (low complexity) spans 23 to 36; the sequence is PHATRAAPAPAQAP. The disordered stretch occupies residues 23-42; that stretch reads PHATRAAPAPAQAPGEMTDS. 6 residues coordinate Fe cation: Glu58, Glu88, His91, Glu140, Glu172, and His175.

The protein belongs to the COQ7 family. It depends on Fe cation as a cofactor.

The protein localises to the cell membrane. It catalyses the reaction a 5-methoxy-2-methyl-3-(all-trans-polyprenyl)benzene-1,4-diol + AH2 + O2 = a 3-demethylubiquinol + A + H2O. It functions in the pathway cofactor biosynthesis; ubiquinone biosynthesis. Functionally, catalyzes the hydroxylation of 2-nonaprenyl-3-methyl-6-methoxy-1,4-benzoquinol during ubiquinone biosynthesis. The chain is 3-demethoxyubiquinol 3-hydroxylase from Variovorax paradoxus (strain S110).